A 232-amino-acid polypeptide reads, in one-letter code: Protein Mis18-alpha (232 aa).

Phosphoserine occurs at positions 36, 39, and 40. The 99-residue stretch at 79–177 (PLVFLCSGCR…SVEAIESYIL (99 aa)) folds into the Mis18 domain. Zn(2+)-binding residues include Cys-84, Cys-87, Cys-140, and Cys-143. Residue Lys-161 forms a Glycyl lysine isopeptide (Lys-Gly) (interchain with G-Cter in SUMO2) linkage. The residue at position 232 (Ser-232) is a Phosphoserine.

The protein belongs to the mis18 family. Homodimer, and heterodimer with OIP5/MIS18B. Identified in a complex containing MIS18A, OIP5/MIS18B, MIS18BP1, RBBP7 and RBBP4.

The protein localises to the nucleus. The protein resides in the chromosome. It localises to the centromere. Its function is as follows. Required for recruitment of CENPA to centromeres and normal chromosome segregation during mitosis. This chain is Protein Mis18-alpha (MIS18A), found in Otolemur garnettii (Small-eared galago).